A 346-amino-acid polypeptide reads, in one-letter code: Holliday junction branch migration complex subunit RuvB (346 aa).

Positions 4–185 (SDRIITASPF…FGIVSRLEFY (182 aa)) are large ATPase domain (RuvB-L). ATP-binding positions include leucine 24, arginine 25, glycine 66, lysine 69, threonine 70, threonine 71, 132-134 (EDY), arginine 175, tyrosine 185, and arginine 222. Threonine 70 contributes to the Mg(2+) binding site. The tract at residues 186–256 (TADELGKIVT…VADAALQMLD (71 aa)) is small ATPAse domain (RuvB-S). Positions 259–346 (ATGLDVLDRK…TTVPSLFDPD (88 aa)) are head domain (RuvB-H). Residues arginine 295, arginine 314, and arginine 319 each coordinate DNA.

The protein belongs to the RuvB family. Homohexamer. Forms an RuvA(8)-RuvB(12)-Holliday junction (HJ) complex. HJ DNA is sandwiched between 2 RuvA tetramers; dsDNA enters through RuvA and exits via RuvB. An RuvB hexamer assembles on each DNA strand where it exits the tetramer. Each RuvB hexamer is contacted by two RuvA subunits (via domain III) on 2 adjacent RuvB subunits; this complex drives branch migration. In the full resolvosome a probable DNA-RuvA(4)-RuvB(12)-RuvC(2) complex forms which resolves the HJ.

The protein resides in the cytoplasm. The enzyme catalyses ATP + H2O = ADP + phosphate + H(+). The RuvA-RuvB-RuvC complex processes Holliday junction (HJ) DNA during genetic recombination and DNA repair, while the RuvA-RuvB complex plays an important role in the rescue of blocked DNA replication forks via replication fork reversal (RFR). RuvA specifically binds to HJ cruciform DNA, conferring on it an open structure. The RuvB hexamer acts as an ATP-dependent pump, pulling dsDNA into and through the RuvAB complex. RuvB forms 2 homohexamers on either side of HJ DNA bound by 1 or 2 RuvA tetramers; 4 subunits per hexamer contact DNA at a time. Coordinated motions by a converter formed by DNA-disengaged RuvB subunits stimulates ATP hydrolysis and nucleotide exchange. Immobilization of the converter enables RuvB to convert the ATP-contained energy into a lever motion, pulling 2 nucleotides of DNA out of the RuvA tetramer per ATP hydrolyzed, thus driving DNA branch migration. The RuvB motors rotate together with the DNA substrate, which together with the progressing nucleotide cycle form the mechanistic basis for DNA recombination by continuous HJ branch migration. Branch migration allows RuvC to scan DNA until it finds its consensus sequence, where it cleaves and resolves cruciform DNA. In Nitrosomonas europaea (strain ATCC 19718 / CIP 103999 / KCTC 2705 / NBRC 14298), this protein is Holliday junction branch migration complex subunit RuvB.